Here is a 286-residue protein sequence, read N- to C-terminus: MNNDILHRYIFDNADVRGEIVQLESSYQEVLSAHIYPVALQALIGELLAATSLLTATIKFSGDISVQLQGDGPVSLAVINGNNKQVLRGVARWNGDIAADASLQQMFGKGYMVITLTPDEGERYQGIVSLDHVNLAACLEEYFNQSEQLPTQIQLFANGKQAAGMLLQVLPAKSGNNDDFEHLSALTSTIKAEELFTLDAEQVLHRLYHQEEVRLFDPVDVTFKCSCSRDRSAAAIKTLPQTEVEEILAEEGKIEMDCEYCTAKYSFDAIDIAALYSGSHSSQSQQ.

2 disulfide bridges follow: Cys225–Cys227 and Cys258–Cys261.

It belongs to the HSP33 family. In terms of processing, under oxidizing conditions two disulfide bonds are formed involving the reactive cysteines. Under reducing conditions zinc is bound to the reactive cysteines and the protein is inactive.

It is found in the cytoplasm. Redox regulated molecular chaperone. Protects both thermally unfolding and oxidatively damaged proteins from irreversible aggregation. Plays an important role in the bacterial defense system toward oxidative stress. The sequence is that of 33 kDa chaperonin from Shewanella frigidimarina (strain NCIMB 400).